Consider the following 328-residue polypeptide: Protein-glutamine deamidase Cif (328 aa).

Positions 1 to 68 (MLEHGVMKIP…TNRTGENPMI (68 aa)) are disordered. Residues 52-63 (RSSSISNTNRTG) are compositionally biased toward polar residues. Residues Cys156, His211, and Gln231 contribute to the active site.

It belongs to the Cif family.

It localises to the secreted. The protein localises to the host nucleus. The enzyme catalyses L-glutaminyl-[protein] + H2O = L-glutamyl-[protein] + NH4(+). Protein-glutamine deamidase effector that inhibits the host cell cycle and other key cellular processes such as the actin network and programmed-cell death. Acts by mediating the side chain deamidation of 'Gln-40' of host NEDD8, converting it to glutamate, thereby abolishing the activity of cullin-RING-based E3 ubiquitin-protein ligase complexes (CRL complexes). Inactivation of CRL complexes prevents ubiquitination and subsequent degradation of the cyclin-dependent kinase inhibitors CDKN1A/p21 and CDKN1B/p27, leading to G1 and G2 cell cycle arrests in host cells. Deamidation of 'Gln-40' of host NEDD8 also triggers macrophage-specific programmed cell death. Also able to catalyze deamidation of 'Gln-40' of host ubiquitin in vitro; however, NEDD8 constitutes the preferred substrate in vivo. Also regulates the host NF-kappa-B signaling via activation of MAPK/ERK cascade: activation of host MAPK/ERK cascade is independent of CRL complexes inhibition, suggesting that Cif has other host protein targets than NEDD8. This chain is Protein-glutamine deamidase Cif, found in Burkholderia pseudomallei (strain K96243).